The sequence spans 391 residues: MSELRLCCDLLVQQVDKTKEVTTTGVSNSEEGIDVGTLLKSTCNTFLKTLEECMQIANAAFTSELLYHTPPGSPQLAMLKSSKMKHPIIPIHNSLERQTELSTCENGSLNMEINGEEEILMKNKNSLYLKSAEIDCSISSEENTDDNITVQGEIMKEDRMENLKNHDNNLSQSGSDSSCSPECLWEEGKEVIPTFFSTMNTSFSDIELLEDSGIPTEAFLASCCAVVPVLDKLGPTVFAPVKMDLVENIKKVNQKYITNKEEFTTLQKIVLHEVEADVAQVRNSATEALLWLKRGLKFLKGFLTEVKNGEKDIQTALNNAYGKTLRQHHGWVVRGVFALALRATPSYEDFVAALTVKEGDHRKEAFSIGMQRDLSLYLPAMKKQMAILDAL.

The sequence is that of Putative protein PLEKHA9 (PLEKHA8P1) from Homo sapiens (Human).